The chain runs to 145 residues: Pleckstrin homology domain-containing protein 1 (145 aa).

In terms of domain architecture, PH spans 26-127; it reads NPERSGWLTK…WINSIGRSIV (102 aa). The segment at 29–53 is binds specifically PtdIns3P; sequence RSGWLTKQGDYIKTWRRRWFVLKRG.

As to quaternary structure, binds PtdIns3P. As to expression, ubiquitously expressed.

It is found in the cytoplasm. Functionally, binds specifically to phosphatidylinositol 3-phosphate (PtdIns3P), but not to other phosphoinositides. The polypeptide is Pleckstrin homology domain-containing protein 1 (PH1) (Arabidopsis thaliana (Mouse-ear cress)).